Here is a 60-residue protein sequence, read N- to C-terminus: Large ribosomal subunit protein uL30 (60 aa).

This sequence belongs to the universal ribosomal protein uL30 family. As to quaternary structure, part of the 50S ribosomal subunit.

In Symbiobacterium thermophilum (strain DSM 24528 / JCM 14929 / IAM 14863 / T), this protein is Large ribosomal subunit protein uL30.